The chain runs to 352 residues: Probable dual-specificity RNA methyltransferase RlmN (352 aa).

The active-site Proton acceptor is glutamate 92. The 231-residue stretch at 98-328 folds into the Radical SAM core domain; sequence YKHGFTACIS…ATIRREMGTD (231 aa). An intrachain disulfide couples cysteine 105 to cysteine 333. The [4Fe-4S] cluster site is built by cysteine 112, cysteine 116, and cysteine 119. Residues 159 to 160, serine 191, 214 to 216, and asparagine 290 contribute to the S-adenosyl-L-methionine site; these read GE and SLH. Cysteine 333 acts as the S-methylcysteine intermediate in catalysis.

It belongs to the radical SAM superfamily. RlmN family. The cofactor is [4Fe-4S] cluster.

Its subcellular location is the cytoplasm. The catalysed reaction is adenosine(2503) in 23S rRNA + 2 reduced [2Fe-2S]-[ferredoxin] + 2 S-adenosyl-L-methionine = 2-methyladenosine(2503) in 23S rRNA + 5'-deoxyadenosine + L-methionine + 2 oxidized [2Fe-2S]-[ferredoxin] + S-adenosyl-L-homocysteine. The enzyme catalyses adenosine(37) in tRNA + 2 reduced [2Fe-2S]-[ferredoxin] + 2 S-adenosyl-L-methionine = 2-methyladenosine(37) in tRNA + 5'-deoxyadenosine + L-methionine + 2 oxidized [2Fe-2S]-[ferredoxin] + S-adenosyl-L-homocysteine. In terms of biological role, specifically methylates position 2 of adenine 2503 in 23S rRNA and position 2 of adenine 37 in tRNAs. This chain is Probable dual-specificity RNA methyltransferase RlmN, found in Alkaliphilus metalliredigens (strain QYMF).